The primary structure comprises 552 residues: Non-structural protein NS1 (552 aa).

This sequence belongs to the orbivirus non-structural protein NS1 family.

The polypeptide is Non-structural protein NS1 (Segment-5) (Epizootic hemorrhagic disease virus 2 (strain Alberta) (EHDV-2)).